A 247-amino-acid polypeptide reads, in one-letter code: tRNA pseudouridine synthase A (247 aa).

The Nucleophile role is filled by Asp-53. Tyr-111 serves as a coordination point for substrate.

It belongs to the tRNA pseudouridine synthase TruA family. In terms of assembly, homodimer.

The catalysed reaction is uridine(38/39/40) in tRNA = pseudouridine(38/39/40) in tRNA. Formation of pseudouridine at positions 38, 39 and 40 in the anticodon stem and loop of transfer RNAs. This Bacillus licheniformis (strain ATCC 14580 / DSM 13 / JCM 2505 / CCUG 7422 / NBRC 12200 / NCIMB 9375 / NCTC 10341 / NRRL NRS-1264 / Gibson 46) protein is tRNA pseudouridine synthase A.